The primary structure comprises 385 residues: MAAFLSAGLGILAPSETYPLPTTSSGWEPRLGSPFPSGPCTSSTGAQAVAEPTGQGPKNPRVSRVTVQLEMKPLWEEFNQLGTEMIVTKAGRRMFPPFQVKILGMDSLADYALLMDFIPLDDKRYRYAFHSSAWLVAGKADPATPGRVHFHPDSPAKGAQWMRQIVSFDKLKLTNNLLDDNGHIILNSMHRYQPRFHVVFVDPRKDSERYAQENFKSFIFTETQFTAVTAYQNHRITQLKIASNPFAKGFRESDLDSWPVAPRPLLSVPARSHSSLSPCVLKGATDREKDPNKASASTSKTPAWLHHQLLPPPEVLLAPATYRPVTYQSLYSGAPSHLGIPRTRPAPYPLPNIRADRDQGGLPLPAGLGLLSPTVVCLGPGQDSQ.

The disordered stretch occupies residues 22 to 61; that stretch reads TTSSGWEPRLGSPFPSGPCTSSTGAQAVAEPTGQGPKNPR. The segment at residues 69–252 is a DNA-binding region (T-box); that stretch reads LEMKPLWEEF…SNPFAKGFRE (184 aa).

Its subcellular location is the nucleus. In terms of biological role, probable transcriptional regulator involved in developmental processes. This Homo sapiens (Human) protein is T-box transcription factor TBX10 (TBX10).